We begin with the raw amino-acid sequence, 118 residues long: Large ribosomal subunit protein bL20 (118 aa).

Belongs to the bacterial ribosomal protein bL20 family.

In terms of biological role, binds directly to 23S ribosomal RNA and is necessary for the in vitro assembly process of the 50S ribosomal subunit. It is not involved in the protein synthesizing functions of that subunit. This Phenylobacterium zucineum (strain HLK1) protein is Large ribosomal subunit protein bL20.